Consider the following 365-residue polypeptide: Cobalt-precorrin-5B C(1)-methyltransferase (365 aa).

This sequence belongs to the CbiD family.

It catalyses the reaction Co-precorrin-5B + S-adenosyl-L-methionine = Co-precorrin-6A + S-adenosyl-L-homocysteine. It participates in cofactor biosynthesis; adenosylcobalamin biosynthesis; cob(II)yrinate a,c-diamide from sirohydrochlorin (anaerobic route): step 6/10. Catalyzes the methylation of C-1 in cobalt-precorrin-5B to form cobalt-precorrin-6A. In Variovorax paradoxus (strain S110), this protein is Cobalt-precorrin-5B C(1)-methyltransferase.